We begin with the raw amino-acid sequence, 666 residues long: Leucine zipper putative tumor suppressor 2 homolog (666 aa).

Disordered regions lie at residues Met-1–Met-35, Ile-227–Thr-249, and Asn-266–Asn-307. Polar residues-rich tracts occupy residues Ile-11–Met-35 and Ile-227–Arg-238. Low complexity-rich tracts occupy residues Thr-239–Thr-249 and Arg-286–Pro-304. Residues Ile-305–Asn-647 adopt a coiled-coil conformation.

The protein belongs to the LZTS2 family.

The protein localises to the cytoplasm. Its subcellular location is the cytoskeleton. It localises to the microtubule organizing center. It is found in the centrosome. In terms of biological role, negative regulator of katanin-mediated microtubule severing and release from the centrosome. Required for central spindle formation and the completion of cytokinesis. Negative regulator of the Wnt signaling pathway. Represses beta-catenin-mediated transcriptional activation by promoting the nuclear exclusion of beta-catenin. This Xenopus laevis (African clawed frog) protein is Leucine zipper putative tumor suppressor 2 homolog (lzts2).